The primary structure comprises 107 residues: Flagellar transcriptional regulator FlhD (107 aa).

It belongs to the FlhD family. As to quaternary structure, homodimer; disulfide-linked. Forms a heterohexamer composed of two FlhC and four FlhD subunits. Each FlhC binds a FlhD dimer, forming a heterotrimer, and a hexamer assembles by dimerization of two heterotrimers.

It localises to the cytoplasm. Functions in complex with FlhC as a master transcriptional regulator that regulates transcription of several flagellar and non-flagellar operons by binding to their promoter region. Activates expression of class 2 flagellar genes, including fliA, which is a flagellum-specific sigma factor that turns on the class 3 genes. Also regulates genes whose products function in a variety of physiological pathways. This is Flagellar transcriptional regulator FlhD from Bordetella bronchiseptica (strain ATCC BAA-588 / NCTC 13252 / RB50) (Alcaligenes bronchisepticus).